A 669-amino-acid polypeptide reads, in one-letter code: Galactocerebrosidase (669 aa).

A signal peptide spans 1-26; the sequence is MTAAAGSAGHAAVPLLLCALLVPGGA. 3 residues coordinate substrate: threonine 93, tryptophan 135, and asparagine 181. Glutamate 182 functions as the Proton donor/acceptor in the catalytic mechanism. Glutamate 258 acts as the Nucleophile in catalysis. Cysteines 271 and 378 form a disulfide. Asparagine 363 carries N-linked (GlcNAc...) asparagine glycosylation. Arginine 380 provides a ligand contact to substrate. N-linked (GlcNAc...) asparagine glycosylation is found at asparagine 387, asparagine 543, and asparagine 586.

The protein belongs to the glycosyl hydrolase 59 family.

It localises to the lysosome. It carries out the reaction a beta-D-galactosyl-(1&lt;-&gt;1')-N-acylsphing-4-enine + H2O = an N-acylsphing-4-enine + D-galactose. The enzyme catalyses beta-D-galactosyl-(1&lt;-&gt;1)-sphing-4-enine + H2O = sphing-4-enine + D-galactose. The catalysed reaction is a D-galactosylceramide + H2O = an N-acyl-sphingoid base + D-galactose. Its function is as follows. Hydrolyzes the galactose ester bonds of glycolipids such as galactosylceramide and galactosylsphingosine. Enzyme with very low activity responsible for the lysosomal catabolism of galactosylceramide, a major lipid in myelin, kidney and epithelial cells of small intestine and colon. This chain is Galactocerebrosidase, found in Canis lupus familiaris (Dog).